Reading from the N-terminus, the 147-residue chain is Large ribosomal subunit protein bL9 (147 aa).

Positions 40–60 (TTGNLKQHEAHERKAAEEAKQ) are disordered. Residues 45-59 (KQHEAHERKAAEEAK) are compositionally biased toward basic and acidic residues.

Belongs to the bacterial ribosomal protein bL9 family.

In terms of biological role, binds to the 23S rRNA. The protein is Large ribosomal subunit protein bL9 of Exiguobacterium sibiricum (strain DSM 17290 / CCUG 55495 / CIP 109462 / JCM 13490 / 255-15).